A 335-amino-acid polypeptide reads, in one-letter code: Pyridoxal 5'-phosphate synthase subunit PdxS (335 aa).

Aspartate 30 is a binding site for D-ribose 5-phosphate. The active-site Schiff-base intermediate with D-ribose 5-phosphate is the lysine 87. Position 159 (glycine 159) interacts with D-ribose 5-phosphate. Arginine 171 contacts D-glyceraldehyde 3-phosphate. Residues glycine 257 and 278–279 (GS) contribute to the D-ribose 5-phosphate site.

The protein belongs to the PdxS/SNZ family. Homohexamer. In the presence of PdxT, forms a dodecamer of heterodimers.

It carries out the reaction aldehydo-D-ribose 5-phosphate + D-glyceraldehyde 3-phosphate + L-glutamine = pyridoxal 5'-phosphate + L-glutamate + phosphate + 3 H2O + H(+). The protein operates within cofactor biosynthesis; pyridoxal 5'-phosphate biosynthesis. In terms of biological role, catalyzes the formation of pyridoxal 5'-phosphate from ribose 5-phosphate (RBP), glyceraldehyde 3-phosphate (G3P) and ammonia. The ammonia is provided by the PdxT subunit. Can also use ribulose 5-phosphate and dihydroxyacetone phosphate as substrates, resulting from enzyme-catalyzed isomerization of RBP and G3P, respectively. The protein is Pyridoxal 5'-phosphate synthase subunit PdxS of Pyrococcus horikoshii (strain ATCC 700860 / DSM 12428 / JCM 9974 / NBRC 100139 / OT-3).